An 847-amino-acid polypeptide reads, in one-letter code: B-cell receptor CD22 (847 aa).

Residues 1-19 form the signal peptide; the sequence is MHLLGPWLLLLVLEYLAFC. The Ig-like V-type domain maps to 20-138; the sequence is DSSKWAFEHP…MERIHLNVSE (119 aa). At 20–687 the chain is on the extracellular side; it reads DSSKWAFEHP…YYSPETIGRR (668 aa). Residues asparagine 67, asparagine 101, and asparagine 112 are each glycosylated (N-linked (GlcNAc...) asparagine). Arginine 120 is a binding site for N-acetylneuraminate. 9 N-linked (GlcNAc...) asparagine glycosylation sites follow: asparagine 135, asparagine 164, asparagine 231, asparagine 295, asparagine 363, asparagine 428, asparagine 445, asparagine 448, and asparagine 479. Ig-like C2-type domains lie at 143–235, 242–324, 331–416, 419–500, 505–582, and 593–676; these read PHIQ…DTVQ, PKLE…AEVF, PEPS…LDVQ, PKKV…VALN, PRDV…QTAS, and PRRL…STLN. A disulfide bridge connects residues cysteine 161 and cysteine 219. 2 disulfides stabilise this stretch: cysteine 265–cysteine 309 and cysteine 353–cysteine 396. 2 disulfide bridges follow: cysteine 442–cysteine 484 and cysteine 529–cysteine 571. Asparagine 574 and asparagine 634 each carry an N-linked (GlcNAc...) asparagine glycan. Cysteine 616 and cysteine 659 are oxidised to a cystine. The helical transmembrane segment at 688–708 threads the bilayer; the sequence is VAVGLGSCLAILILAICGLKL. Topologically, residues 709–847 are cytoplasmic; it reads QRRWKRTQSQ…ENVDYVILKH (139 aa). 3 positions are modified to phosphoserine: serine 725, serine 726, and serine 729. Short sequence motifs (ITIM motif) lie at residues 760-765 and 794-799; these read ISYTTL and VTYSVL. Tyrosine 762 is subject to Phosphotyrosine. Phosphotyrosine occurs at positions 807, 822, and 842. Short sequence motifs (ITIM motif) lie at residues 820-825 and 840-845; these read IHYSEL and VDYVIL.

Belongs to the immunoglobulin superfamily. SIGLEC (sialic acid binding Ig-like lectin) family. As to quaternary structure, predominantly monomer of isoform CD22-beta. Also found as heterodimer of isoform CD22-beta and a shorter isoform. Interacts with PTPN6/SHP-1, LYN, SYK, PIK3R1/PIK3R2 and PLCG1 upon phosphorylation. Interacts with GRB2, INPP5D and SHC1 upon phosphorylation. May form a complex with INPP5D/SHIP, GRB2 and SHC1. Post-translationally, phosphorylation of Tyr-762, Tyr-807 and Tyr-822 are involved in binding to SYK, GRB2 and SYK, respectively. Phosphorylation of Tyr-842 is involved in binding to SYK, PLCG2 and PIK3R1/PIK3R2. Phosphorylated on tyrosine residues by LYN.

It localises to the cell membrane. Most highly expressed siglec (sialic acid-binding immunoglobulin-like lectin) on B-cells that plays a role in various aspects of B-cell biology including differentiation, antigen presentation, and trafficking to bone marrow. Binds to alpha 2,6-linked sialic acid residues of surface molecules such as CD22 itself, CD45 and IgM in a cis configuration. Can also bind to ligands on other cells as an adhesion molecule in a trans configuration. Acts as an inhibitory coreceptor on the surface of B-cells and inhibits B-cell receptor induced signaling, characterized by inhibition of the calcium mobilization and cellular activation. Mechanistically, the immunoreceptor tyrosine-based inhibitory motif domain is phosphorylated by the Src kinase LYN, which in turn leads to the recruitment of the protein tyrosine phosphatase 1/PTPN6, leading to the negative regulation of BCR signaling. If this negative signaling from is of sufficient strength, apoptosis of the B-cell can be induced. This chain is B-cell receptor CD22, found in Gorilla gorilla gorilla (Western lowland gorilla).